The chain runs to 472 residues: Cannabinoid receptor 1 (472 aa).

Topologically, residues 1–116 (MKSILDGLAD…CFMILNPSQQ (116 aa)) are extracellular. The interval 2 to 23 (KSILDGLADTTFRTITTDLLYV) is required for mitochondrial localization. N77 and N83 each carry an N-linked (GlcNAc...) asparagine glycan. Residues 117-142 (LAIAVLSLTLGTFTVLENLLVLCVIL) traverse the membrane as a helical segment. Topologically, residues 143–154 (HSRSLRCRPSYH) are cytoplasmic. A helical membrane pass occupies residues 155-175 (FIGSLAVADLLGSVIFVYSFV). The Extracellular portion of the chain corresponds to 176 to 187 (DFHVFHRKDSPN). The chain crosses the membrane as a helical span at residues 188 to 212 (VFLFKLGGVTASFTASVGSLFLTAI). Residues 213–232 (DRYISIHRPLAYKKIVTRPK) lie on the Cytoplasmic side of the membrane. Residues 233–255 (AVVAFCLMWTIAIVIAVLPLLGW) traverse the membrane as a helical segment. Residues 256–273 (NCKKLQSVCSDIFPLIDE) are Extracellular-facing. A helical membrane pass occupies residues 274–299 (TYLMFWIGVTSVLLLFIVYAYMYILW). The Cytoplasmic portion of the chain corresponds to 300–344 (KAHIHAVRMIQRGTQKSIIIHTSEDGKVQVTRPDQARMDIRLAKT). A helical membrane pass occupies residues 345–365 (LVLILVVLIICWGPLLAIMVY). Over 366 to 377 (DVFGKMNKLIKT) the chain is Extracellular. Residues 378-399 (VFAFCSMLCLLNSTVNPIIYAL) form a helical membrane-spanning segment. The Cytoplasmic portion of the chain corresponds to 400–472 (RSKDLRHAFR…VSTNTSAKAL (73 aa)). Residue C415 is the site of S-palmitoyl cysteine attachment. A phosphoserine mark is found at S425 and S429.

It belongs to the G-protein coupled receptor 1 family. Interacts (via C-terminus) with CNRIP1; this interaction attenuates constitutive, but not agonist-dependent, inhibition of voltage-gated Ca(2+) channels in neurons. Associates with G protein alpha subunits, including G(i) alpha-1/GNAI1, G(i) alpha-3/GNAI3 and G(o)-alpha/GNAO1; palmitoylation is important for interaction with GNAI3 and GNAO1. In terms of processing, palmitoylation at Cys-415 is important for recruitment at plasma membrane and lipid rafts and association with G protein alpha subunits. Expressed in cerebral arterial muscle cells and cerebral cortex (at protein level).

The protein resides in the cell membrane. It localises to the membrane raft. Its subcellular location is the mitochondrion outer membrane. The protein localises to the cell projection. It is found in the axon. The protein resides in the presynapse. With respect to regulation, hemopressin, a peptide derived from hemoglobin subunit alpha (HBA1 and/or HBA2), acts as an antagonist peptide: hemopressin-binding efficiently blocks cannabinoid receptor CNR1 and subsequent signaling. G-protein coupled receptor for endogenous cannabinoids (eCBs), including N-arachidonoylethanolamide (also called anandamide or AEA) and 2-arachidonoylglycerol (2-AG), as well as phytocannabinoids, such as delta(9)-tetrahydrocannabinol (THC). Mediates many cannabinoid-induced effects, acting, among others, on food intake, memory loss, gastrointestinal motility, catalepsy, ambulatory activity, anxiety, chronic pain. Signaling typically involves reduction in cyclic AMP. In the hypothalamus, may have a dual effect on mitochondrial respiration depending upon the agonist dose and possibly upon the cell type. Increases respiration at low doses, while decreases respiration at high doses. At high doses, CNR1 signal transduction involves G-protein alpha-i protein activation and subsequent inhibition of mitochondrial soluble adenylate cyclase, decrease in cyclic AMP concentration, inhibition of protein kinase A (PKA)-dependent phosphorylation of specific subunits of the mitochondrial electron transport system, including NDUFS2. In the hypothalamus, inhibits leptin-induced reactive oxygen species (ROS) formation and mediates cannabinoid-induced increase in SREBF1 and FASN gene expression. In response to cannabinoids, drives the release of orexigenic beta-endorphin, not that of melanocyte-stimulating hormone alpha/alpha-MSH, from hypothalamic POMC neurons, hence promoting food intake. In the hippocampus, regulates cellular respiration and energy production in response to cannabinoids. Involved in cannabinoid-dependent depolarization-induced suppression of inhibition (DSI), a process in which depolarization of CA1 postsynaptic pyramidal neurons mobilizes eCBs, which retrogradely activate presynaptic CB1 receptors, transiently decreasing GABAergic inhibitory neurotransmission. Also reduces excitatory synaptic transmission. In superior cervical ganglions and cerebral vascular smooth muscle cells, inhibits voltage-gated Ca(2+) channels in a constitutive, as well as agonist-dependent manner. In cerebral vascular smooth muscle cells, inhibition of voltage-gated Ca(2+) channels leads to vasodilation and decrease in vascular tone. Induces leptin production in adipocytes and reduces LRP2-mediated leptin clearance in the kidney, hence participating in hyperleptinemia. In adipose tissue, CNR1 signaling leads to increased expression of SREBF1, ACACA and FASN genes. In the liver, activation by endocannabinoids leads to increased de novo lipogenesis and reduced fatty acid catabolism, associated with increased expression of SREBF1/SREBP-1, GCK, ACACA, ACACB and FASN genes. May also affect de novo cholesterol synthesis and HDL-cholesteryl ether uptake. Peripherally modulates energy metabolism. In high carbohydrate diet-induced obesity, may decrease the expression of mitochondrial dihydrolipoyl dehydrogenase/DLD in striated muscles, as well as that of selected glucose/ pyruvate metabolic enzymes, hence affecting energy expenditure through mitochondrial metabolism. In response to cannabinoid anandamide, elicits a pro-inflammatory response in macrophages, which involves NLRP3 inflammasome activation and IL1B and IL18 secretion. In macrophages infiltrating pancreatic islets, this process may participate in the progression of type-2 diabetes and associated loss of pancreatic beta-cells. This chain is Cannabinoid receptor 1 (CNR1), found in Felis catus (Cat).